A 556-amino-acid chain; its full sequence is MPVHATPAAESQIISKPEVVRRTANFKPSVWGDRFANYAEDIITQTQMQEQVEELKQVVRKEVFTNAADDSSHQLKLIDEIQRLGVAYHFESEIDQALERIHETYQDIHDGGDLYNVALRFRLLRRHGYNVSCDVFNKFKDTNGDYKKSLVTDLSGMLSFYEAAHLRVHGEKLLEEALVFTTTHLQSASAKSSLLKTQITEAVERPLLKTMERLGARRYMSIYQDEASYSENLLKLAKLDFNVVQCLHKKELSDILRWYKELDFARRMPFARDRIVELFFWIAGIYFEPEYVFGRHILTKLIEITTVMDDMYDAFGTFEELVILTEAIDRWDASCMDQLPDYMQPFYITLLDVIDEVEEELTKQGRSYRIHYAKEIMKNQARLYFAEAIWFHEGCTPKMDGYMRVAASSVGNTMLSVVSLVGMGDIITKFEFEWLTNEPKILRASNTIFRLMDDIAGYKFEKERGHVASSIDCYMNEYGVSEQETIDIFNKRIVDSWKDINEEFLRPTAAPVPVLNRVLNLTRVVDLLYKRGDAFTHVGKLMKDCIAAMFIDPVPL.

The Mg(2+) site is built by aspartate 309, aspartate 313, aspartate 453, and glutamate 461. The DDXXD motif signature appears at 309–313 (DDMYD).

It belongs to the terpene synthase family. Tpsa subfamily. Mg(2+) serves as cofactor. The cofactor is Mn(2+). In terms of tissue distribution, expressed in ripe fruits and roots. Not detected in vegetative tissues.

Its subcellular location is the cytoplasm. The protein localises to the cytosol. It catalyses the reaction (2E)-geranyl diphosphate = (1S,5S)-alpha-pinene + diphosphate. It participates in secondary metabolite biosynthesis; terpenoid biosynthesis. Its function is as follows. Monoterpene synthase catalyzing the production of (-)-alpha-pinene, beta-phellandrene and beta-myrcene as the major products. Unable to use farnesyl diphosphate as substrate. Exclusively expressed in the fruit of wild strawberries. Not detected in cultivated varieties. This Fragaria vesca (Woodland strawberry) protein is (-)-alpha-pinene synthase.